The sequence spans 361 residues: Rhomboid domain-containing protein 2 (361 aa).

5 helical membrane-spanning segments follow: residues 19–39 (SATF…LFLL), 63–83 (LVTY…AIII), 100–120 (CFFT…FESV), 158–178 (FGVV…SWLI), and 182–202 (SFLS…TYCY). Disordered stretches follow at residues 265–287 (PSYP…PPGH) and 318–361 (PASA…VAMP). 2 stretches are compositionally biased toward polar residues: residues 267-276 (YPVTQMQHAS) and 318-328 (PASAGTSQGVQ).

This sequence belongs to the peptidase S54 family. In terms of assembly, might form homotrimers; these trimers are only formed in retina. Widely expressed, including in retina and brain (at protein level), as well as in kidney, testis and ovary. Expressed in all layers of the retina, including inner segments of photoreceptor cells and ganglion cells (at protein level).

Its subcellular location is the golgi apparatus. It localises to the cis-Golgi network membrane. This is Rhomboid domain-containing protein 2 (Rhbdd2) from Mus musculus (Mouse).